We begin with the raw amino-acid sequence, 289 residues long: Golgi to ER traffic protein 2 (289 aa).

Basic and acidic residues predominate over residues 1–10; it reads MSEVSEAEKR. The disordered stretch occupies residues 1–68; that stretch reads MSEVSEAEKR…LQRGSNSGQS (68 aa). The Cytoplasmic portion of the chain corresponds to 1–153; sequence MSEVSEAEKR…VGVHQFQVRQ (153 aa). The span at 11–21 shows a compositional bias: basic residues; that stretch reads RILREKRKQKF. The span at 33–68 shows a compositional bias: polar residues; the sequence is ITTQQPGGASGDSTVTSAEISDNEGSLQRGSNSGQS. A helical transmembrane segment spans residues 154 to 173; it reads LKAYMLLLRWAILLPFIYYV. Residues 174–196 are Lumenal-facing; it reads MHPGTAHWLHTSRFLHFVMEPRN. The helical transmembrane segment at 197–216 threads the bilayer; sequence FFMVFTTFEVASISIYYQVL. The Cytoplasmic segment spans residues 217–263; that stretch reads LTLERTNKVNSLSYSSKLVTWAGLVPDGMLPIDNLQGKVVVALHYWD. The chain crosses the membrane as a helical span at residues 264–284; the sequence is ILSMYLTDLSLCLVAAGLMKY. Topologically, residues 285 to 289 are lumenal; the sequence is YHAAP.

This sequence belongs to the GET2 family. In terms of assembly, component of the Golgi to ER traffic (GET) complex, which is composed of GET1, GET2 and GET3. Within the complex, GET1 and GET2 form a heterotetramer which is stabilized by phosphatidylinositol binding and which binds to the GET3 homodimer.

Its subcellular location is the endoplasmic reticulum membrane. The protein resides in the golgi apparatus membrane. In terms of biological role, required for the post-translational delivery of tail-anchored (TA) proteins to the endoplasmic reticulum. Together with GET1, acts as a membrane receptor for soluble GET3, which recognizes and selectively binds the transmembrane domain of TA proteins in the cytosol. The GET complex cooperates with the HDEL receptor ERD2 to mediate the ATP-dependent retrieval of resident ER proteins that contain a C-terminal H-D-E-L retention signal from the Golgi to the ER. In Eremothecium gossypii (strain ATCC 10895 / CBS 109.51 / FGSC 9923 / NRRL Y-1056) (Yeast), this protein is Golgi to ER traffic protein 2.